Consider the following 121-residue polypeptide: Large ribosomal subunit protein bL19 (121 aa).

This sequence belongs to the bacterial ribosomal protein bL19 family.

This protein is located at the 30S-50S ribosomal subunit interface and may play a role in the structure and function of the aminoacyl-tRNA binding site. This is Large ribosomal subunit protein bL19 from Chloroherpeton thalassium (strain ATCC 35110 / GB-78).